Consider the following 323-residue polypeptide: Dof zinc finger protein DOF3.6 (323 aa).

A Dof-type zinc finger spans residues 76–130 (LNCPRCDSTNTKFCYFNNYSLTQPRHFCKTCRRYWTRGGSLRNVPVGGGFRRNKR). Residues cysteine 78, cysteine 81, cysteine 103, and cysteine 106 each coordinate Zn(2+). Disordered regions lie at residues 121–160 (VGGG…SYSN) and 304–323 (GGNS…HLSF). Residues 126 to 135 (RRNKRSKSRS) are compositionally biased toward basic residues. The span at 136–159 (KSTVVVSTDNTTSTSSLTSRPSYS) shows a compositional bias: low complexity.

In terms of assembly, interacts with OBF4. Predominantly expressed in roots.

The protein localises to the nucleus. Functionally, transcription factor that binds specifically to a 5'-AA[AG]G-3' consensus core sequence. Enhances the DNA binding of OBF transcription factors to OCS elements. This chain is Dof zinc finger protein DOF3.6 (DOF3.6), found in Arabidopsis thaliana (Mouse-ear cress).